Here is a 493-residue protein sequence, read N- to C-terminus: UPF0699 transmembrane protein YdbT (493 aa).

Helical transmembrane passes span 18 to 38 (CHTI…VYIV), 46 to 66 (FYGA…SIIK), 188 to 208 (LMAA…FALI), 232 to 252 (IGIY…FSIA), 370 to 390 (VIFS…WGYL), and 393 to 413 (ILLP…AWTI).

This sequence belongs to the UPF0699 family.

Its subcellular location is the cell membrane. In Bacillus subtilis (strain 168), this protein is UPF0699 transmembrane protein YdbT (ydbT).